Consider the following 312-residue polypeptide: Acetaldehyde dehydrogenase (312 aa).

11–14 (SGNI) is a binding site for NAD(+). C129 serves as the catalytic Acyl-thioester intermediate. NAD(+) contacts are provided by residues 160–168 (SAGPGTRAN) and N287.

The protein belongs to the acetaldehyde dehydrogenase family.

The enzyme catalyses acetaldehyde + NAD(+) + CoA = acetyl-CoA + NADH + H(+). In Sphingobium yanoikuyae (Sphingomonas yanoikuyae), this protein is Acetaldehyde dehydrogenase (xylQ).